A 612-amino-acid chain; its full sequence is Cytoplasmic dynein 1 intermediate chain 2 (612 aa).

2 stretches are compositionally biased toward basic and acidic residues: residues 1-13 and 20-43; these read MSDK…ELER and QIRE…KKEA. The interval 1 to 188 is disordered; it reads MSDKSDLKAE…PHELTEEEKQ (188 aa). The residue at position 2 (S2) is an N-acetylserine. Diphosphoserine is present on S51. Residues S51 and S84 each carry the phosphoserine modification. Residues 82–91 show a composition bias toward low complexity; that stretch reads PSSKSVSTPS. T89 carries the post-translational modification Phosphothreonine. Phosphoserine is present on residues S91, S95, and S98. Over residues 164-188 the composition is skewed to basic and acidic residues; sequence EKTLKKDEENDSKAPPHELTEEEKQ. WD repeat units lie at residues 251 to 300, 304 to 344, 353 to 394, 403 to 443, 448 to 493, 496 to 536, and 542 to 581; these read SKHR…TTPE, HCQS…RTPV, AHTH…HPQD, SKAV…AGIS, GHQG…PLYS, DNSD…EVPT, and EGNP…AVPR.

The protein belongs to the dynein intermediate chain family. Homodimer. The cytoplasmic dynein 1 complex consists of two catalytic heavy chains (HCs) and a number of non-catalytic subunits presented by intermediate chains (ICs), light intermediate chains (LICs) and light chains (LCs); the composition seems to vary in respect to the IC, LIC and LC composition. The heavy chain homodimer serves as a scaffold for the probable homodimeric assembly of the respective non-catalytic subunits. The ICs and LICs bind directly to the HC dimer and the LCs assemble on the IC dimer. Interacts with DYNLT3. Interacts with DYNLT1. Interacts (dephosphorylated at Ser-84) with DCTN1. Interacts with BICD2. Interacts with SPEF2. Interacts with CFAP61. In terms of processing, the phosphorylation status of Ser-84 appears to be involved in dynactin-dependent target binding. Pyrophosphorylation by 5-diphosphoinositol pentakisphosphate (5-IP7) promotes interaction with DCTN1. Serine pyrophosphorylation is achieved by Mg(2+)-dependent, but enzyme independent transfer of a beta-phosphate from a inositol pyrophosphate to a pre-phosphorylated serine residue.

It is found in the cytoplasm. The protein resides in the cytoskeleton. Functionally, acts as one of several non-catalytic accessory components of the cytoplasmic dynein 1 complex that are thought to be involved in linking dynein to cargos and to adapter proteins that regulate dynein function. Cytoplasmic dynein 1 acts as a motor for the intracellular retrograde motility of vesicles and organelles along microtubules. The intermediate chains mediate the binding of dynein to dynactin via its 150 kDa component (p150-glued) DCTN1. Involved in membrane-transport, such as Golgi apparatus, late endosomes and lysosomes. The chain is Cytoplasmic dynein 1 intermediate chain 2 (Dync1i2) from Mus musculus (Mouse).